A 60-amino-acid polypeptide reads, in one-letter code: Prokaryotic ubiquitin-like protein UBact (60 aa).

The interval M1–E60 is disordered. Basic and acidic residues predominate over residues P29–Q50. Over residues A51 to E60 the composition is skewed to basic residues. Residue E60 forms an Isoglutamyl lysine isopeptide (Glu-Lys) (interchain with K-? in acceptor proteins) linkage.

Belongs to the ubiquitin-like protein UBact family.

Its function is as follows. May function as a protein modifier covalently attached to lysine residues of substrate proteins. This may serve to target the modified proteins for degradation by proteasomes. This Fraserbacteria sp. (strain RBG_16_55_9) protein is Prokaryotic ubiquitin-like protein UBact.